Reading from the N-terminus, the 171-residue chain is uncharacterized protein (171 aa).

A PfpI endopeptidase domain is found at 3-171; that stretch reads KKVAIILANE…FNREIVKQLQ (169 aa).

It belongs to the peptidase C56 family.

This is an uncharacterized protein from Staphylococcus aureus (strain MRSA252).